Consider the following 495-residue polypeptide: NAD(+)--protein-arginine ADP-ribosyltransferase Tre1 (495 aa).

Positions proline 278–valine 309 are disordered. In terms of domain architecture, TR mART core spans methionine 315 to proline 495. Residues arginine 344–proline 495 are ART domain. Active-site residues include arginine 406, serine 431, and glutamate 466.

The protein belongs to the Arg-specific ADP-ribosyltransferase family.

The protein resides in the secreted. It is found in the host cytoplasm. It carries out the reaction L-arginyl-[protein] + NAD(+) = N(omega)-(ADP-D-ribosyl)-L-arginyl-[protein] + nicotinamide + H(+). Toxic component of a contact-dependent interbacterial competition system (also called effector-immunity systems). Acts by ADP-ribosylating a number of target proteins in target cells; E.coli target proteins include FtsZ, EFTu, RNase E, Fis, YegQ, GuaB and IF2. This chain is NAD(+)--protein-arginine ADP-ribosyltransferase Tre1, found in Pseudomonas putida (strain GB-1).